We begin with the raw amino-acid sequence, 531 residues long: Large neutral amino acids transporter small subunit 2 (531 aa).

Positions 1–29 (MEKGARQRNNTAKNHPGSDTSPEAEASSG) are disordered. Topologically, residues 1–43 (MEKGARQRNNTAKNHPGSDTSPEAEASSGGGGVALKKEIGLVS) are cytoplasmic. Polar residues predominate over residues 7-21 (QRNNTAKNHPGSDTS). Serine 18, serine 21, serine 27, and serine 28 each carry phosphoserine. Residues 44-64 (ACGIIVGNIIGSGIFVSPKGV) traverse the membrane as a helical segment. Isoleucine 52 is a binding site for L-leucine. Residues 65-72 (LENAGSVG) are Extracellular-facing. The chain crosses the membrane as a helical span at residues 73 to 94 (LALIVWIVTGIITAVGALCYAE). Over 95 to 115 (LGVTIPKSGGDYSYVKDIFGG) the chain is Cytoplasmic. The chain crosses the membrane as a helical span at residues 116-148 (LAGFLRLWIAVLVIYPTNQAVIALTFSNYVLQP). L-tryptophan is bound at residue asparagine 133. Residues 149–156 (LFPTCFPP) lie on the Extracellular side of the membrane. The helical transmembrane segment at 157–177 (ESGLRLLAAICLLLLTWVNCS) threads the bilayer. Topologically, residues 178–180 (SVR) are cytoplasmic. A helical transmembrane segment spans residues 181-209 (WATRVQDIFTAGKLLALALIIIMGIVQIC). The Extracellular portion of the chain corresponds to 210–229 (KGEFFWLEPKNAFENFQEPD). The helical transmembrane segment at 230–251 (IGLVALAFLQGSFAYGGWNFLN) threads the bilayer. L-leucine is bound at residue glycine 245. Topologically, residues 252 to 264 (YVTEELVDPYKNL) are cytoplasmic. A helical membrane pass occupies residues 265–286 (PRAIFISIPLVTFVYVFANIAY). The Extracellular segment spans residues 287–311 (VTAMSPQELLASNAVAVTFGEKLLG). Residues 312–337 (VMAWIMPISVALSTFGGVNGSLFTSS) form a helical membrane-spanning segment. Over 338-363 (RLFFAGAREGHLPSVLAMIHVKRCTP) the chain is Cytoplasmic. Residues 364-381 (IPALLFTCLSTLLMLVTS) traverse the membrane as a helical segment. The Extracellular portion of the chain corresponds to 382–385 (DMYT). A helical transmembrane segment spans residues 386 to 407 (LINYVGFINYLFYGVTVAGQIV). An L-tryptophan-binding site is contributed by asparagine 394. Residues 408–422 (LRWKKPDIPRPIKVS) are Cytoplasmic-facing. 2 helical membrane-spanning segments follow: residues 423-445 (LLFP…WSEP) and 446-465 (VVCG…YFLG). Residues 466-531 (VYWQHKPKCF…VKDPDSEEQP (66 aa)) lie on the Cytoplasmic side of the membrane. The segment at 499–531 (NSGAEETTDDLEEQHKPIFKPTPVKDPDSEEQP) is disordered. A Phosphoserine modification is found at serine 527.

It belongs to the amino acid-polyamine-organocation (APC) superfamily. L-type amino acid transporter (LAT) (TC 2.A.3.8) family. In terms of assembly, disulfide-linked heterodimer composed of the catalytic light chain subunit SLC7A8 and the heavy chain subunit SLC3A2. SLC3A2 acts as a chaperone for correct plasma membrane trafficking and stabilization of SLC7A8 and modulates the substrate affinity and specificity of SLC7A8. ICAM-1 associates with the heterodimer SLC3A2/SLC7A8; facilitates leucine uptake. As to expression, strongly expressed in kidney and small intestine. Moderately present in placenta, ovary and brain. Expressed in the inner ear.

The protein resides in the cell membrane. It is found in the basolateral cell membrane. It carries out the reaction L-histidine(in) + L-phenylalanine(out) = L-histidine(out) + L-phenylalanine(in). It catalyses the reaction L-tryptophan(in) + L-phenylalanine(out) = L-tryptophan(out) + L-phenylalanine(in). The enzyme catalyses L-isoleucine(in) + L-phenylalanine(out) = L-isoleucine(out) + L-phenylalanine(in). The catalysed reaction is L-valine(in) + L-phenylalanine(out) = L-valine(out) + L-phenylalanine(in). It carries out the reaction L-leucine(in) + L-phenylalanine(out) = L-leucine(out) + L-phenylalanine(in). It catalyses the reaction L-glutamine(in) + L-phenylalanine(out) = L-glutamine(out) + L-phenylalanine(in). The enzyme catalyses L-cysteine(in) + L-phenylalanine(out) = L-cysteine(out) + L-phenylalanine(in). The catalysed reaction is L-phenylalanine(out) + L-methionine(in) = L-phenylalanine(in) + L-methionine(out). It carries out the reaction L-leucine(out) + L-methionine(in) = L-leucine(in) + L-methionine(out). It catalyses the reaction L-cysteine(out) + L-methionine(in) = L-cysteine(in) + L-methionine(out). The enzyme catalyses S-methylmercury-L-cysteine(out) + L-methionine(in) = S-methylmercury-L-cysteine(in) + L-methionine(out). The catalysed reaction is S-methylmercury-L-cysteine(in) + L-leucine(out) = S-methylmercury-L-cysteine(out) + L-leucine(in). It carries out the reaction S-methylmercury-L-cysteine(in) + L-phenylalanine(out) = S-methylmercury-L-cysteine(out) + L-phenylalanine(in). It catalyses the reaction L-phenylalanine(out) + L-serine(in) = L-phenylalanine(in) + L-serine(out). The enzyme catalyses L-phenylalanine(out) + glycine(in) = L-phenylalanine(in) + glycine(out). The catalysed reaction is L-phenylalanine(out) + L-alanine(in) = L-phenylalanine(in) + L-alanine(out). It carries out the reaction L-tryptophan(in) = L-tryptophan(out). It catalyses the reaction 3,3',5-triiodo-L-thyronine(out) = 3,3',5-triiodo-L-thyronine(in). The enzyme catalyses 3,3'-diiodo-L-thyronine(out) = 3,3'-diiodo-L-thyronine(in). The catalysed reaction is L-dopa(out) + L-phenylalanine(in) = L-dopa(in) + L-phenylalanine(out). In terms of biological role, associates with SLC3A2 to form a functional heterodimeric complex that translocates small and large neutral amino acids with broad specificity and a stoichiometry of 1:1. Functions as amino acid antiporter mediating the influx of extracellular essential amino acids mainly in exchange with the efflux of highly concentrated intracellular amino acids. Has relatively symmetrical selectivities but strongly asymmetrical substrate affinities at both the intracellular and extracellular sides of the transporter. This asymmetry allows SLC7A8 to regulate intracellular amino acid pools (mM concentrations) by exchange with external amino acids (uM concentration range), equilibrating the relative concentrations of different amino acids across the plasma membrane instead of mediating their net uptake. May play an essential role in the reabsorption of neutral amino acids from the epithelial cells to the bloodstream in the kidney. Involved in the uptake of methylmercury (MeHg) when administered as the L-cysteine or D,L-homocysteine complexes, and hence plays a role in metal ion homeostasis and toxicity. Involved in the cellular activity of small molecular weight nitrosothiols, via the stereoselective transport of L-nitrosocysteine (L-CNSO) across the transmembrane. Imports the thyroid hormone diiodothyronine (T2) and to a smaller extent triiodothyronine (T3) but not rT 3 or thyroxine (T4). Mediates the uptake of L-DOPA. May participate in auditory function. The polypeptide is Large neutral amino acids transporter small subunit 2 (Slc7a8) (Mus musculus (Mouse)).